The chain runs to 307 residues: Aspartate carbamoyltransferase catalytic subunit (307 aa).

Positions 49 and 50 each coordinate carbamoyl phosphate. An L-aspartate-binding site is contributed by Lys-77. Arg-99, His-127, and Gln-130 together coordinate carbamoyl phosphate. 2 residues coordinate L-aspartate: Arg-160 and Arg-211. Carbamoyl phosphate-binding residues include Ala-250 and Pro-251.

The protein belongs to the aspartate/ornithine carbamoyltransferase superfamily. ATCase family. Heterododecamer (2C3:3R2) of six catalytic PyrB chains organized as two trimers (C3), and six regulatory PyrI chains organized as three dimers (R2).

It catalyses the reaction carbamoyl phosphate + L-aspartate = N-carbamoyl-L-aspartate + phosphate + H(+). It functions in the pathway pyrimidine metabolism; UMP biosynthesis via de novo pathway; (S)-dihydroorotate from bicarbonate: step 2/3. Functionally, catalyzes the condensation of carbamoyl phosphate and aspartate to form carbamoyl aspartate and inorganic phosphate, the committed step in the de novo pyrimidine nucleotide biosynthesis pathway. This is Aspartate carbamoyltransferase catalytic subunit from Bacillus pumilus (strain SAFR-032).